We begin with the raw amino-acid sequence, 275 residues long: Hydroxyethylthiazole kinase (275 aa).

Position 50 (M50) interacts with substrate. Residues R126 and S171 each contribute to the ATP site. A200 contributes to the substrate binding site.

Belongs to the Thz kinase family. Mg(2+) is required as a cofactor.

The catalysed reaction is 5-(2-hydroxyethyl)-4-methylthiazole + ATP = 4-methyl-5-(2-phosphooxyethyl)-thiazole + ADP + H(+). It participates in cofactor biosynthesis; thiamine diphosphate biosynthesis; 4-methyl-5-(2-phosphoethyl)-thiazole from 5-(2-hydroxyethyl)-4-methylthiazole: step 1/1. In terms of biological role, catalyzes the phosphorylation of the hydroxyl group of 4-methyl-5-beta-hydroxyethylthiazole (THZ). This Acinetobacter baumannii (strain ACICU) protein is Hydroxyethylthiazole kinase.